Reading from the N-terminus, the 704-residue chain is ATP-dependent DNA helicase Hel308 (704 aa).

ATP contacts are provided by residues Gln31 and 49 to 56 (SPTASGKT). The Helicase ATP-binding domain occupies 36 to 200 (RKGLLDGKRL…WLNAELVATN (165 aa)). The DEAH box signature appears at 148–151 (DEFH). One can recognise a Helicase C-terminal domain in the interval 235 to 439 (AIIAYTLDIV…AFYSFLISII (205 aa)). A binds Hjc region spans residues 366–645 (VVGYMDLIPV…LHARVKDGVK (280 aa)). The tract at residues 432-644 (YSFLISIIAS…ELHARVKDGV (213 aa)) is required for helicase activity. An inhibits intrinsic ATPase, and helicase region spans residues 646–704 (PELIELVKIPGIGRVRARLLYQHDIKKPEDIVLNPEKVKQLLGPNLGEKIVREAARTIA).

This sequence belongs to the helicase family. Hel308 subfamily. In terms of assembly, monomer; forms a 1:2 complex with Hjc, which may form a complex with Holliday junction DNA. Mg(2+) is required as a cofactor.

The catalysed reaction is Couples ATP hydrolysis with the unwinding of duplex DNA by translocating in the 3'-5' direction.. It carries out the reaction ATP + H2O = ADP + phosphate + H(+). The enzyme catalyses Couples ATP hydrolysis with the unwinding of duplex DNA at the replication fork by translocating in the 5'-3' direction. This creates two antiparallel DNA single strands (ssDNA). The leading ssDNA polymer is the template for DNA polymerase III holoenzyme which synthesizes a continuous strand.. Helicase activity is inhibited by Hjc and by PCNA123 and PCNA323. Functionally, an ATP, Mg(2+)-dependent DNA 3'-5' and 5'-3' helicase that may be involved in repair of stalled replication forks. Stimulated by both ss and dsDNA. Unwinds both leading and lagging strands in replication fork structures, unlike orthologs in P.furiosus and M.thermautotrophicus which only unwind the lagging strand and only have 3'-5' helicase activity. Preferentially binds dsDNA with overhangs or branched DNA. Able to anneal DNA substrates that could form a replication fork-like structure, has replication fork reversal activity (at least in vitro). The polypeptide is ATP-dependent DNA helicase Hel308 (Sulfurisphaera tokodaii (strain DSM 16993 / JCM 10545 / NBRC 100140 / 7) (Sulfolobus tokodaii)).